Consider the following 141-residue polypeptide: Galactose-6-phosphate isomerase subunit LacA (141 aa).

It belongs to the LacAB/RpiB family. In terms of assembly, heteromultimeric protein consisting of LacA and LacB.

The catalysed reaction is aldehydo-D-galactose 6-phosphate = keto-D-tagatose 6-phosphate. It participates in carbohydrate metabolism; D-galactose 6-phosphate degradation; D-tagatose 6-phosphate from D-galactose 6-phosphate: step 1/1. In Streptococcus pneumoniae serotype 2 (strain D39 / NCTC 7466), this protein is Galactose-6-phosphate isomerase subunit LacA.